The chain runs to 291 residues: Pyridoxal 5'-phosphate synthase subunit PdxS (291 aa).

D23 contributes to the D-ribose 5-phosphate binding site. K80 acts as the Schiff-base intermediate with D-ribose 5-phosphate in catalysis. G152 serves as a coordination point for D-ribose 5-phosphate. Position 164 (R164) interacts with D-glyceraldehyde 3-phosphate. D-ribose 5-phosphate contacts are provided by residues G213 and G234 to S235.

It belongs to the PdxS/SNZ family. In terms of assembly, in the presence of PdxT, forms a dodecamer of heterodimers.

The catalysed reaction is aldehydo-D-ribose 5-phosphate + D-glyceraldehyde 3-phosphate + L-glutamine = pyridoxal 5'-phosphate + L-glutamate + phosphate + 3 H2O + H(+). It functions in the pathway cofactor biosynthesis; pyridoxal 5'-phosphate biosynthesis. Its function is as follows. Catalyzes the formation of pyridoxal 5'-phosphate from ribose 5-phosphate (RBP), glyceraldehyde 3-phosphate (G3P) and ammonia. The ammonia is provided by the PdxT subunit. Can also use ribulose 5-phosphate and dihydroxyacetone phosphate as substrates, resulting from enzyme-catalyzed isomerization of RBP and G3P, respectively. This Methanocorpusculum labreanum (strain ATCC 43576 / DSM 4855 / Z) protein is Pyridoxal 5'-phosphate synthase subunit PdxS.